A 587-amino-acid chain; its full sequence is Aspartate--tRNA ligase (587 aa).

Residue Glu-174 coordinates L-aspartate. The segment at 198–201 (QITK) is aspartate. Arg-220 is a binding site for L-aspartate. ATP is bound by residues 220–222 (RDE) and Gln-229. L-aspartate is bound at residue His-443. Glu-477 serves as a coordination point for ATP. Arg-484 provides a ligand contact to L-aspartate. 529-532 (GLDR) is an ATP binding site.

The protein belongs to the class-II aminoacyl-tRNA synthetase family. Type 1 subfamily. Homodimer.

It localises to the cytoplasm. The enzyme catalyses tRNA(Asp) + L-aspartate + ATP = L-aspartyl-tRNA(Asp) + AMP + diphosphate. In terms of biological role, catalyzes the attachment of L-aspartate to tRNA(Asp) in a two-step reaction: L-aspartate is first activated by ATP to form Asp-AMP and then transferred to the acceptor end of tRNA(Asp). The polypeptide is Aspartate--tRNA ligase (Streptococcus pneumoniae (strain 70585)).